The sequence spans 99 residues: RNA-binding protein Hfq (99 aa).

A Sm domain is found at 9–68 (DPYLNALRRERIPVSIYLVNGIKLQGQIESFDQFVILLKNTVNQMVYKHAISTVVPARSV). The interval 67–99 (SVSHHNNNAQQQYQQQAAQAASAQSNETSSQAE) is disordered. Low complexity predominate over residues 72–99 (NNNAQQQYQQQAAQAASAQSNETSSQAE).

The protein belongs to the Hfq family. In terms of assembly, homohexamer.

Functionally, RNA chaperone that binds small regulatory RNA (sRNAs) and mRNAs to facilitate mRNA translational regulation in response to envelope stress, environmental stress and changes in metabolite concentrations. Also binds with high specificity to tRNAs. The chain is RNA-binding protein Hfq from Actinobacillus succinogenes (strain ATCC 55618 / DSM 22257 / CCUG 43843 / 130Z).